We begin with the raw amino-acid sequence, 118 residues long: Cycloviolacin-O8 (118 aa).

Residues 1–22 form the signal peptide; the sequence is MEMKNMVVGLFLIAAFALPALA. Residues 23-84 constitute a propeptide that is removed on maturation; that stretch reads TNFEKDFITH…THSNSINALG (62 aa). A cross-link (cyclopeptide (Gly-Asn)) is located at residues 85–115; sequence GTLPCGESCVWIPCISSVVGCSCKSKVCYKN. 3 cysteine pairs are disulfide-bonded: Cys-89–Cys-105, Cys-93–Cys-107, and Cys-98–Cys-112. Residues 116 to 118 constitute a propeptide that is removed on maturation; that stretch reads SLA.

In terms of processing, cycloviolacin-O8 is a cyclic peptide. Expressed in leaves, petals, petioles and roots but not in runners (at protein level).

Its function is as follows. Probably participates in a plant defense mechanism. The polypeptide is Cycloviolacin-O8 (Voc1) (Viola odorata (Sweet violet)).